The chain runs to 376 residues: Lipid-A-disaccharide synthase (376 aa).

Belongs to the LpxB family.

The catalysed reaction is a lipid X + a UDP-2-N,3-O-bis[(3R)-3-hydroxyacyl]-alpha-D-glucosamine = a lipid A disaccharide + UDP + H(+). It participates in bacterial outer membrane biogenesis; LPS lipid A biosynthesis. Its function is as follows. Condensation of UDP-2,3-diacylglucosamine and 2,3-diacylglucosamine-1-phosphate to form lipid A disaccharide, a precursor of lipid A, a phosphorylated glycolipid that anchors the lipopolysaccharide to the outer membrane of the cell. This Pseudomonas fluorescens (strain Pf0-1) protein is Lipid-A-disaccharide synthase.